A 569-amino-acid chain; its full sequence is Adenine deaminase 1 (569 aa).

Belongs to the metallo-dependent hydrolases superfamily. Adenine deaminase family. It depends on Mn(2+) as a cofactor.

The catalysed reaction is adenine + H2O + H(+) = hypoxanthine + NH4(+). This chain is Adenine deaminase 1, found in Rhizobium johnstonii (strain DSM 114642 / LMG 32736 / 3841) (Rhizobium leguminosarum bv. viciae).